Here is a 106-residue protein sequence, read N- to C-terminus: Large ribosomal subunit protein P1 (106 aa).

Residues 66 to 76 show a composition bias toward low complexity; it reads AQPQATQAQPA. Residues 66-106 are disordered; the sequence is AQPQATQAQPAAEEKKEEKKEEEKKGPSEEEIASGLASLFG. Basic and acidic residues predominate over residues 77-93; it reads AEEKKEEKKEEEKKGPS.

It belongs to the eukaryotic ribosomal protein P1/P2 family. As to quaternary structure, part of the 50S ribosomal subunit. Homodimer, it forms part of the ribosomal stalk which helps the ribosome interact with GTP-bound translation factors. Forms a heptameric uL10/P0(P1)2(P1)2(P1)2 complex, where uL10/P0 forms an elongated spine to which the P1 dimers bind in a sequential fashion.

Its function is as follows. Forms part of the ribosomal stalk, playing a central role in the interaction of the ribosome with GTP-bound translation factors. The chain is Large ribosomal subunit protein P1 from Saccharolobus solfataricus (strain ATCC 35092 / DSM 1617 / JCM 11322 / P2) (Sulfolobus solfataricus).